Reading from the N-terminus, the 774-residue chain is Fe(3+) dicitrate transport protein FecA (774 aa).

The signal sequence occupies residues 1 to 33; sequence MTPLRVFRKTTPLVNTIRLSLLPLAGLSFSAFA. Residues 56–63 carry the TonB box motif; it reads FTLSVDAS. Residues 129–250 form the TBDR plug domain; that stretch reads DVFEHAGARD…VGGVVNFVTR (122 aa). In terms of domain architecture, TBDR beta-barrel spans 255 to 774; it reads DFGIEAGVEG…TLYMQGSLKF (520 aa). The short motif at 757-774 is the TonB C-terminal box element; it reads GIYAGQPRTLYMQGSLKF.

Belongs to the TonB-dependent receptor family. Interacts (via periplasmic N-terminus) with FecR (via periplasmic C-terminus).

It is found in the cell outer membrane. In terms of biological role, fecA is the outer membrane receptor protein in the Fe(3+) dicitrate transport system. The chain is Fe(3+) dicitrate transport protein FecA (fecA) from Escherichia coli (strain K12).